Consider the following 240-residue polypeptide: tRNA pseudouridine synthase B (240 aa).

Catalysis depends on Asp-54, which acts as the Nucleophile.

The protein belongs to the pseudouridine synthase TruB family. Type 1 subfamily.

The catalysed reaction is uridine(55) in tRNA = pseudouridine(55) in tRNA. In terms of biological role, responsible for synthesis of pseudouridine from uracil-55 in the psi GC loop of transfer RNAs. The chain is tRNA pseudouridine synthase B from Chlorobium phaeovibrioides (strain DSM 265 / 1930) (Prosthecochloris vibrioformis (strain DSM 265)).